Here is a 444-residue protein sequence, read N- to C-terminus: Porin AaxA (444 aa).

An N-terminal signal peptide occupies residues 1–19 (MAFSRFYLLTALYTGGILA). Residues 42–68 (KNSTQDSDSSPSESSPHPRQEPRRHVL) are disordered. The span at 46–56 (QDSDSSPSESS) shows a compositional bias: low complexity.

Belongs to the OprB family.

The protein resides in the cell outer membrane. Its function is as follows. Facilitates L-arginine uptake, as part of the AaxABC system. The arginine uptake by the bacterium in the macrophage may be a virulence factor against the host innate immune response. This is Porin AaxA (aaxA) from Chlamydia felis (strain Fe/C-56) (Chlamydophila felis).